Consider the following 454-residue polypeptide: Bifunctional protein GlmU (454 aa).

A pyrophosphorylase region spans residues 1-227; the sequence is MTQLSVVILA…FMEVEGANNR (227 aa). Residues 9 to 12, K23, Q74, 79 to 80, 101 to 103, G138, E152, N167, and N225 contribute to the UDP-N-acetyl-alpha-D-glucosamine site; these read LAAG, GT, and YGD. Position 103 (D103) interacts with Mg(2+). Position 225 (N225) interacts with Mg(2+). Residues 228–248 form a linker region; that stretch reads LQLAALERFYQKTQAEKLLLA. An N-acetyltransferase region spans residues 249–454; the sequence is GVRLIDPARF…QGWQRPTKKK (206 aa). 2 residues coordinate UDP-N-acetyl-alpha-D-glucosamine: R331 and K349. Catalysis depends on H361, which acts as the Proton acceptor. UDP-N-acetyl-alpha-D-glucosamine is bound by residues Y364 and N375. Acetyl-CoA is bound by residues A378, 384-385, S403, A421, and R438; that span reads NY.

In the N-terminal section; belongs to the N-acetylglucosamine-1-phosphate uridyltransferase family. It in the C-terminal section; belongs to the transferase hexapeptide repeat family. Homotrimer. The cofactor is Mg(2+).

Its subcellular location is the cytoplasm. It carries out the reaction alpha-D-glucosamine 1-phosphate + acetyl-CoA = N-acetyl-alpha-D-glucosamine 1-phosphate + CoA + H(+). The enzyme catalyses N-acetyl-alpha-D-glucosamine 1-phosphate + UTP + H(+) = UDP-N-acetyl-alpha-D-glucosamine + diphosphate. Its pathway is nucleotide-sugar biosynthesis; UDP-N-acetyl-alpha-D-glucosamine biosynthesis; N-acetyl-alpha-D-glucosamine 1-phosphate from alpha-D-glucosamine 6-phosphate (route II): step 2/2. The protein operates within nucleotide-sugar biosynthesis; UDP-N-acetyl-alpha-D-glucosamine biosynthesis; UDP-N-acetyl-alpha-D-glucosamine from N-acetyl-alpha-D-glucosamine 1-phosphate: step 1/1. It participates in bacterial outer membrane biogenesis; LPS lipid A biosynthesis. Catalyzes the last two sequential reactions in the de novo biosynthetic pathway for UDP-N-acetylglucosamine (UDP-GlcNAc). The C-terminal domain catalyzes the transfer of acetyl group from acetyl coenzyme A to glucosamine-1-phosphate (GlcN-1-P) to produce N-acetylglucosamine-1-phosphate (GlcNAc-1-P), which is converted into UDP-GlcNAc by the transfer of uridine 5-monophosphate (from uridine 5-triphosphate), a reaction catalyzed by the N-terminal domain. The sequence is that of Bifunctional protein GlmU from Actinobacillus pleuropneumoniae serotype 3 (strain JL03).